We begin with the raw amino-acid sequence, 185 residues long: Coordinator of PRMT5 and differentiation stimulator (185 aa).

Position 1 is an N-acetylmethionine (Met1). The tract at residues 1 to 109 is disordered; sequence MDPPTAGAQS…MSGCLPKEQA (109 aa). Composition is skewed to basic and acidic residues over residues 42–52 and 66–77; these read SSQEKATENAT and SPAHGEGTHCEE. Residue Ser66 is modified to Phosphoserine. Over residues 78 to 89 the composition is skewed to acidic residues; the sequence is EGFAEDDEDSDG.

As to quaternary structure, interacts with PRMT5. Interacts with histone H4; specifically interacts with the N-terminus of histone H4 but not with histone H3. Interacts with CBFB. Found in a complex with PRMT5, RUNX1 and CBFB.

Its subcellular location is the nucleus. Its function is as follows. Histone-binding protein required for histone H4 methyltransferase activity of PRMT5. Specifically required for histone H4 'Arg-3' methylation mediated by PRMT5, but not histone H3 'Arg-8' methylation, suggesting that it modulates the substrate specificity of PRMT5. Specifically interacts with the N-terminus of histone H4 but not with histone H3, suggesting that it acts by promoting the association between histone H4 and PRMT5. Involved in CCNE1 promoter repression. Plays a role in muscle cell differentiation by modulating the recruitment of PRMT5 to the promoter of genes involved in the coordination between cell cycle exit and muscle differentiation. This chain is Coordinator of PRMT5 and differentiation stimulator (COPRS), found in Bos taurus (Bovine).